The following is a 96-amino-acid chain: UPF0235 protein VV1_1522 (96 aa).

It belongs to the UPF0235 family.

This Vibrio vulnificus (strain CMCP6) protein is UPF0235 protein VV1_1522.